A 219-amino-acid polypeptide reads, in one-letter code: tRNA (guanine-N(7)-)-methyltransferase (219 aa).

4 residues coordinate S-adenosyl-L-methionine: D47, E72, N99, and D125. Residue D125 is part of the active site. Residues K129 and D161 each coordinate substrate.

Belongs to the class I-like SAM-binding methyltransferase superfamily. TrmB family.

The catalysed reaction is guanosine(46) in tRNA + S-adenosyl-L-methionine = N(7)-methylguanosine(46) in tRNA + S-adenosyl-L-homocysteine. It participates in tRNA modification; N(7)-methylguanine-tRNA biosynthesis. Its function is as follows. Catalyzes the formation of N(7)-methylguanine at position 46 (m7G46) in tRNA. This chain is tRNA (guanine-N(7)-)-methyltransferase, found in Nostoc sp. (strain PCC 7120 / SAG 25.82 / UTEX 2576).